We begin with the raw amino-acid sequence, 241 residues long: Small ribosomal subunit protein uS3 (241 aa).

Residues 39 to 107 (MRKFVMDELK…ETHLNIVEVR (69 aa)) form the KH type-2 domain. The tract at residues 214–241 (ASERRALEGDAQGPASRDRDRDRRRDNA) is disordered. Basic and acidic residues predominate over residues 229-241 (SRDRDRDRRRDNA).

This sequence belongs to the universal ribosomal protein uS3 family. Part of the 30S ribosomal subunit. Forms a tight complex with proteins S10 and S14.

Functionally, binds the lower part of the 30S subunit head. Binds mRNA in the 70S ribosome, positioning it for translation. The sequence is that of Small ribosomal subunit protein uS3 from Rhizobium rhizogenes (strain K84 / ATCC BAA-868) (Agrobacterium radiobacter).